The chain runs to 875 residues: Kelch-like protein 29 (875 aa).

The segment covering 115-126 (WGQTPINQSTPW) has biased composition (polar residues). Disordered regions lie at residues 115–145 (WGQTPINQSTPWDTDEPPSKQMRESDNPGTG) and 248–291 (GPTA…DSAH). The span at 131 to 140 (PPSKQMRESD) shows a compositional bias: basic and acidic residues. The BTB domain maps to 329 to 401 (TDLKIVVEGR…VYTGSLVIDS (73 aa)). Kelch repeat units lie at residues 585–635 (VIVL…VSAG), 637–683 (NIYL…VYDG), 684–730 (KIYT…VCGG), 732–778 (IYVF…TLNG), 779–821 (FVFI…VLDG), and 822–870 (KIYA…VIKK).

This Homo sapiens (Human) protein is Kelch-like protein 29 (KLHL29).